A 445-amino-acid chain; its full sequence is NADH-quinone oxidoreductase subunit F (445 aa).

61-70 provides a ligand contact to NAD(+); the sequence is GRGGAGFSTG. 174–221 serves as a coordination point for FMN; sequence GAGRYICGEETALINSLEGRRANPRSKPPFPATSGVWGKPTCVNNVET. 4 residues coordinate [4Fe-4S] cluster: Cys-351, Cys-354, Cys-357, and Cys-398.

Belongs to the complex I 51 kDa subunit family. As to quaternary structure, composed of 13 different subunits. Subunits NuoCD, E, F, and G constitute the peripheral sector of the complex. It depends on FMN as a cofactor. Requires [4Fe-4S] cluster as cofactor.

The enzyme catalyses a quinone + NADH + 5 H(+)(in) = a quinol + NAD(+) + 4 H(+)(out). Functionally, NDH-1 shuttles electrons from NADH, via FMN and iron-sulfur (Fe-S) centers, to quinones in the respiratory chain. The immediate electron acceptor for the enzyme in this species is believed to be ubiquinone. Couples the redox reaction to proton translocation (for every two electrons transferred, four hydrogen ions are translocated across the cytoplasmic membrane), and thus conserves the redox energy in a proton gradient. The protein is NADH-quinone oxidoreductase subunit F (nuoF) of Salmonella typhimurium (strain LT2 / SGSC1412 / ATCC 700720).